The following is a 159-amino-acid chain: UPF0262 protein PHZ_c2197 (159 aa).

This sequence belongs to the UPF0262 family.

This Phenylobacterium zucineum (strain HLK1) protein is UPF0262 protein PHZ_c2197.